A 148-amino-acid polypeptide reads, in one-letter code: Small ribosomal subunit protein uS7m (148 aa).

This sequence belongs to the universal ribosomal protein uS7 family. As to quaternary structure, part of the small ribosomal subunit.

The protein localises to the mitochondrion. Functionally, one of the primary rRNA binding proteins, it binds directly to 18S rRNA where it nucleates assembly of the head domain of the small subunit. The chain is Small ribosomal subunit protein uS7m (RPS7) from Arabidopsis thaliana (Mouse-ear cress).